The following is a 297-amino-acid chain: Sirohydrochlorin cobaltochelatase CbiKP (297 aa).

The first 28 residues, 1–28 (MSRHPMVTRLLCLVFSCLIILACSPAFA), serve as a signal peptide directing secretion. His-124 contacts heme. His-182 (proton acceptor) is an active-site residue. His-182, Glu-212, and His-244 together coordinate Co(2+).

Belongs to the CbiK family. As to quaternary structure, homotetramer; dimer of dimers.

The protein resides in the periplasm. The catalysed reaction is Co-sirohydrochlorin + 2 H(+) = sirohydrochlorin + Co(2+). It catalyses the reaction siroheme + 2 H(+) = sirohydrochlorin + Fe(2+). Its function is as follows. Catalyzes the insertion of Co(2+) into sirohydrochlorin. To a lesser extent, is also able to insert Fe(2+) into sirohydrochlorin, yielding siroheme. Its periplasmic location means that it cannot participate in cobalamin biosynthesis and its genomic environment suggests it is likely to be associated with a heme or metal transport system. The sequence is that of Sirohydrochlorin cobaltochelatase CbiKP (cbiKp) from Nitratidesulfovibrio vulgaris (strain ATCC 29579 / DSM 644 / CCUG 34227 / NCIMB 8303 / VKM B-1760 / Hildenborough) (Desulfovibrio vulgaris).